A 65-amino-acid polypeptide reads, in one-letter code: Sulfur carrier protein TtuB (65 aa).

The residue at position 65 (glycine 65) is a 1-thioglycine; alternate. Glycine 65 carries the glycyl adenylate; alternate modification. A Glycyl cysteine thioester (Gly-Cys) (interchain with C-192 in TtuC); alternate cross-link involves residue glycine 65. Glycine 65 participates in a covalent cross-link: Glycyl lysine isopeptide (Gly-Lys) (interchain with K-? in acceptor proteins); alternate.

It belongs to the TtuB family. As to quaternary structure, is able to form a heterocomplex with TtuA. The C-terminal glycine residue of TtuB is first activated by TtuC as an acyl-adenylate (TtuB-COAMP), and then converted to the thiocarboxylate form (TtuB-COSH) by the cysteine desulfurases IscS or SufS.

The protein operates within tRNA modification. Required for the 2-thiolation of 5-methyluridine residue at position 54 in the T loop of tRNAs, leading to 5-methyl-2-thiouridine (m(5)s(2)U or s(2)T). This modification allows thermal stabilization of tRNAs in thermophilic microorganisms, and is essential for cell growth at high temperatures. Thiocarboxylated TtuB functions as the sulfur donor in the sulfurtransferase reaction catalyzed by TtuA. TtuB also functions as a protein modifier covalently attached to lysine residues of the target proteins TtuA and TtuC. TtuB conjugation might play a regulatory role to ensure appropriate sulfur transfer in cells. This is Sulfur carrier protein TtuB from Thermus thermophilus (strain ATCC BAA-163 / DSM 7039 / HB27).